Consider the following 39-residue polypeptide: MELLAALNLEPIFQLTFVGLIVIAGPIVIAVLAFRGGDL.

Residues 12–32 (IFQLTFVGLIVIAGPIVIAVL) form a helical membrane-spanning segment.

Belongs to the Psb30/Ycf12 family. In terms of assembly, PSII is composed of 1 copy each of membrane proteins PsbA, PsbB, PsbC, PsbD, PsbE, PsbF, PsbH, PsbI, PsbJ, PsbK, PsbL, PsbM, PsbT, PsbX, PsbY, PsbZ, Psb30/Ycf12, peripheral proteins PsbO, CyanoQ (PsbQ), PsbU, PsbV and a large number of cofactors. It forms dimeric complexes.

It localises to the cellular thylakoid membrane. In terms of biological role, a core subunit of photosystem II (PSII), probably helps stabilize the reaction center. The chain is Photosystem II reaction center protein Psb30 from Crocosphaera subtropica (strain ATCC 51142 / BH68) (Cyanothece sp. (strain ATCC 51142)).